The sequence spans 106 residues: Valine dehydrogenase (106 aa).

Lys91 is an active-site residue.

It belongs to the Glu/Leu/Phe/Val dehydrogenases family. As to quaternary structure, homodimer.

It localises to the cytoplasm. It carries out the reaction L-valine + NAD(+) + H2O = 3-methyl-2-oxobutanoate + NH4(+) + NADH + H(+). Its pathway is amino-acid degradation; L-valine degradation. In terms of biological role, oxidative deamination of branched-chain amino acids. The catabolism of valine is the major source of fatty acid precursors for macrolide biosynthesis and a vital source of antibiotic precursors. The chain is Valine dehydrogenase (vdh) from Streptomyces ambofaciens.